A 222-amino-acid chain; its full sequence is THAP domain-containing protein 6 (222 aa).

Residues 1–89 (MVKCCSAIGC…LKPGVIPSIF (89 aa)) form a THAP-type zinc finger. An HCFC1-binding motif (HBM) motif is present at residues 139-142 (EHSY). Residues 149 to 194 (KKLKHKLDHVIGELEDTKESLRNVLDREKRFQKSLRKTIRELKDEC) are a coiled coil.

This is THAP domain-containing protein 6 (THAP6) from Homo sapiens (Human).